Consider the following 217-residue polypeptide: N-(5'-phosphoribosyl)anthranilate isomerase (217 aa).

Belongs to the TrpF family.

It catalyses the reaction N-(5-phospho-beta-D-ribosyl)anthranilate = 1-(2-carboxyphenylamino)-1-deoxy-D-ribulose 5-phosphate. Its pathway is amino-acid biosynthesis; L-tryptophan biosynthesis; L-tryptophan from chorismate: step 3/5. In Bacillus velezensis (strain DSM 23117 / BGSC 10A6 / LMG 26770 / FZB42) (Bacillus amyloliquefaciens subsp. plantarum), this protein is N-(5'-phosphoribosyl)anthranilate isomerase.